The primary structure comprises 196 residues: Putative NADH dehydrogenase/NAD(P)H nitroreductase PST_3601 (196 aa).

This sequence belongs to the nitroreductase family. HadB/RutE subfamily. The cofactor is FMN.

The sequence is that of Putative NADH dehydrogenase/NAD(P)H nitroreductase PST_3601 from Stutzerimonas stutzeri (strain A1501) (Pseudomonas stutzeri).